The chain runs to 294 residues: Glycine--tRNA ligase alpha subunit (294 aa).

It belongs to the class-II aminoacyl-tRNA synthetase family. In terms of assembly, tetramer of two alpha and two beta subunits.

Its subcellular location is the cytoplasm. The catalysed reaction is tRNA(Gly) + glycine + ATP = glycyl-tRNA(Gly) + AMP + diphosphate. The protein is Glycine--tRNA ligase alpha subunit of Oleidesulfovibrio alaskensis (strain ATCC BAA-1058 / DSM 17464 / G20) (Desulfovibrio alaskensis).